A 1684-amino-acid polypeptide reads, in one-letter code: Protein Wiz (1684 aa).

Residues methionine 1–alanine 77 form a disordered region. Basic and acidic residues predominate over residues aspartate 13–isoleucine 24. 5 C2H2-type zinc fingers span residues phenylalanine 308–histidine 330, leucine 345–histidine 367, asparagine 454–histidine 477, arginine 734–histidine 756, and methionine 802–histidine 824. Residues leucine 854–proline 876 are disordered. The C2H2-type 6 zinc-finger motif lies at threonine 903–histidine 925. Glycyl lysine isopeptide (Lys-Gly) (interchain with G-Cter in SUMO2) cross-links involve residues lysine 916, lysine 972, lysine 988, lysine 1000, and lysine 1021. The interval phenylalanine 1005–proline 1072 is disordered. Position 1029 is a phosphoserine (serine 1029). Threonine 1031 carries the post-translational modification Phosphothreonine. Residues lysine 1033 and lysine 1038 each participate in a glycyl lysine isopeptide (Lys-Gly) (interchain with G-Cter in SUMO2) cross-link. Phosphoserine occurs at positions 1039 and 1045. Polar residues predominate over residues proline 1040–glutamine 1057. Threonine 1049 is modified (phosphothreonine). Serine 1050 and serine 1058 each carry phosphoserine. The interaction with CTBP1 and CTBP2 1 stretch occupies residues proline 1063–threonine 1067. The C2H2-type 7 zinc-finger motif lies at isoleucine 1076–histidine 1098. Residue lysine 1089 forms a Glycyl lysine isopeptide (Lys-Gly) (interchain with G-Cter in SUMO2) linkage. A phosphoserine mark is found at serine 1112 and serine 1139. The tract at residues serine 1127–lysine 1208 is disordered. Residues lysine 1141 and lysine 1145 each participate in a glycyl lysine isopeptide (Lys-Gly) (interchain with G-Cter in SUMO2) cross-link. Phosphoserine occurs at positions 1155, 1160, and 1167. Glycyl lysine isopeptide (Lys-Gly) (interchain with G-Cter in SUMO2) cross-links involve residues lysine 1171 and lysine 1172. A phosphoserine mark is found at serine 1179 and serine 1184. Lysine 1195 carries the N6,N6,N6-trimethyllysine; by EHMT2; alternate modification. Lysine 1195 carries the post-translational modification N6,N6-dimethyllysine; by EHMT2; alternate. A Glycyl lysine isopeptide (Lys-Gly) (interchain with G-Cter in SUMO2) cross-link involves residue lysine 1210. The interval proline 1247–serine 1251 is interaction with CTBP1 and CTBP2 2. Residues isoleucine 1260–histidine 1282 form a C2H2-type 8 zinc finger. Lysine 1273 participates in a covalent cross-link: Glycyl lysine isopeptide (Lys-Gly) (interchain with G-Cter in SUMO2). The residue at position 1296 (serine 1296) is a Phosphoserine. Lysine 1315 participates in a covalent cross-link: Glycyl lysine isopeptide (Lys-Gly) (interchain with G-Cter in SUMO2). A disordered region spans residues alanine 1320–glycine 1384. Residues alanine 1335 to serine 1351 show a composition bias toward low complexity. 2 positions are modified to phosphoserine: serine 1342 and serine 1347. Glycyl lysine isopeptide (Lys-Gly) (interchain with G-Cter in SUMO2) cross-links involve residues lysine 1376, lysine 1389, lysine 1403, lysine 1405, and lysine 1415. The segment at alanine 1430–histidine 1452 adopts a C2H2-type 9 zinc-finger fold. Residues lysine 1481, lysine 1497, and lysine 1510 each participate in a glycyl lysine isopeptide (Lys-Gly) (interchain with G-Cter in SUMO2) cross-link. Disordered stretches follow at residues threonine 1496–valine 1587 and glutamine 1592–valine 1611. At serine 1550 the chain carries Phosphoserine. Lysine 1556 is covalently cross-linked (Glycyl lysine isopeptide (Lys-Gly) (interchain with G-Cter in SUMO1); alternate). A Glycyl lysine isopeptide (Lys-Gly) (interchain with G-Cter in SUMO2); alternate cross-link involves residue lysine 1556. Basic and acidic residues predominate over residues lysine 1556–arginine 1574. Residues lysine 1567 and lysine 1593 each participate in a glycyl lysine isopeptide (Lys-Gly) (interchain with G-Cter in SUMO2) cross-link. Over residues glutamine 1599–valine 1611 the composition is skewed to pro residues. The C2H2-type 10 zinc finger occupies leucine 1629 to histidine 1655. Residues serine 1662–proline 1684 form a disordered region. Lysine 1663 is covalently cross-linked (Glycyl lysine isopeptide (Lys-Gly) (interchain with G-Cter in SUMO2)). The span at glutamine 1672–proline 1684 shows a compositional bias: low complexity.

Belongs to the krueppel C2H2-type zinc-finger protein family. Part of a complex containing at least CDYL, REST, WIZ, SETB1, EHMT1 and EHMT2. Interacts with EHMT1, EHMT2, CTBP1 and CTBP2. According to PubMed:9795207, isoform L and isoform S are brain-specific. According to PubMed:16702210, isoform S is ubiquitously expressed.

It is found in the nucleus. In terms of biological role, may link EHMT1 and EHMT2 histone methyltransferases to the CTBP corepressor machinery. May be involved in EHMT1-EHMT2 heterodimer formation and stabilization. In Mus musculus (Mouse), this protein is Protein Wiz (Wiz).